We begin with the raw amino-acid sequence, 499 residues long: Glucose-6-phosphate exchanger SLC37A2 (499 aa).

A helical membrane pass occupies residues 21 to 40; sequence YRGFIIVMTFLFYTCYHLSR. N-linked (GlcNAc...) asparagine glycans are attached at residues Asn-53, Asn-62, and Asn-66. A run of 11 helical transmembrane segments spans residues 86 to 106, 116 to 136, 143 to 163, 187 to 207, 208 to 228, 302 to 322, 334 to 354, 362 to 382, 391 to 411, 434 to 454, and 458 to 478; these read GSLD…SGIF, LSGG…GYYW, YYIL…PAVV, AVGN…AWGL, SFIV…FFLV, LCLL…PLYI, GDLS…AGGI, AITC…YNYF, IAML…ITTA, AIID…AGVL, and GWNY…LLLA.

Belongs to the major facilitator superfamily. Organophosphate:Pi antiporter (OPA) (TC 2.A.1.4) family.

It localises to the endoplasmic reticulum membrane. The catalysed reaction is D-glucose 6-phosphate(in) + phosphate(out) = D-glucose 6-phosphate(out) + phosphate(in). Inorganic phosphate and glucose-6-phosphate antiporter. May transport cytoplasmic glucose-6-phosphate into the lumen of the endoplasmic reticulum and translocate inorganic phosphate into the opposite direction. The sequence is that of Glucose-6-phosphate exchanger SLC37A2 from Xenopus laevis (African clawed frog).